Here is a 231-residue protein sequence, read N- to C-terminus: Putative N-acetylmannosamine-6-phosphate 2-epimerase (231 aa).

The protein belongs to the NanE family.

The catalysed reaction is an N-acyl-D-glucosamine 6-phosphate = an N-acyl-D-mannosamine 6-phosphate. It participates in amino-sugar metabolism; N-acetylneuraminate degradation; D-fructose 6-phosphate from N-acetylneuraminate: step 3/5. Its function is as follows. Converts N-acetylmannosamine-6-phosphate (ManNAc-6-P) to N-acetylglucosamine-6-phosphate (GlcNAc-6-P). The polypeptide is Putative N-acetylmannosamine-6-phosphate 2-epimerase (Listeria innocua serovar 6a (strain ATCC BAA-680 / CLIP 11262)).